A 222-amino-acid polypeptide reads, in one-letter code: Cell division protein FtsQ (222 aa).

The Cytoplasmic portion of the chain corresponds to 1–5 (MNKKV). The chain crosses the membrane as a helical span at residues 6-26 (IAIVVGVVVVLVAILGVVAWF). Residues 27–222 (VPILKVGNIE…ISSPSMVTVR (196 aa)) are Extracellular-facing. The 69-residue stretch at 30-98 (LKVGNIEVTG…STITVELTER (69 aa)) folds into the POTRA domain.

This sequence belongs to the FtsQ/DivIB family. FtsQ subfamily.

Its subcellular location is the cell membrane. Essential cell division protein. The protein is Cell division protein FtsQ of Corynebacterium glutamicum (strain ATCC 13032 / DSM 20300 / JCM 1318 / BCRC 11384 / CCUG 27702 / LMG 3730 / NBRC 12168 / NCIMB 10025 / NRRL B-2784 / 534).